A 360-amino-acid polypeptide reads, in one-letter code: D-alanine--D-alanine ligase (360 aa).

One can recognise an ATP-grasp domain in the interval 146-352 (KLCVADAGIA…FPELAERLLQ (207 aa)). 179-234 (EEKFIYPFFVKPANLGSSIGISKVHHREQLPAALKSACSLDSKIVVEKAITGREIE) lines the ATP pocket. Mg(2+) contacts are provided by Asp305, Glu319, and Asn321.

Belongs to the D-alanine--D-alanine ligase family. It depends on Mg(2+) as a cofactor. Requires Mn(2+) as cofactor.

Its subcellular location is the cytoplasm. It catalyses the reaction 2 D-alanine + ATP = D-alanyl-D-alanine + ADP + phosphate + H(+). The protein operates within cell wall biogenesis; peptidoglycan biosynthesis. Cell wall formation. The sequence is that of D-alanine--D-alanine ligase from Pelodictyon phaeoclathratiforme (strain DSM 5477 / BU-1).